Consider the following 209-residue polypeptide: Proteasome subunit beta (209 aa).

A propeptide spans 1 to 10 (MVEQSDTMKG) (removed in mature form; by autocatalysis). Catalysis depends on Thr11, which acts as the Nucleophile.

It belongs to the peptidase T1B family. In terms of assembly, the 20S proteasome core is composed of 14 alpha and 14 beta subunits that assemble into four stacked heptameric rings, resulting in a barrel-shaped structure. The two inner rings, each composed of seven catalytic beta subunits, are sandwiched by two outer rings, each composed of seven alpha subunits. The catalytic chamber with the active sites is on the inside of the barrel. Has a gated structure, the ends of the cylinder being occluded by the N-termini of the alpha-subunits. Is capped at one or both ends by the proteasome regulatory ATPase, PAN.

It is found in the cytoplasm. The enzyme catalyses Cleavage of peptide bonds with very broad specificity.. The formation of the proteasomal ATPase PAN-20S proteasome complex, via the docking of the C-termini of PAN into the intersubunit pockets in the alpha-rings, triggers opening of the gate for substrate entry. Interconversion between the open-gate and close-gate conformations leads to a dynamic regulation of the 20S proteasome proteolysis activity. Its function is as follows. Component of the proteasome core, a large protease complex with broad specificity involved in protein degradation. In Methanospirillum hungatei JF-1 (strain ATCC 27890 / DSM 864 / NBRC 100397 / JF-1), this protein is Proteasome subunit beta.